Consider the following 171-residue polypeptide: Shikimate kinase (171 aa).

14–19 lines the ATP pocket; that stretch reads GAGKST. Ser-18 is a binding site for Mg(2+). Residues Asp-36, Arg-60, and Gly-82 each coordinate substrate. Arg-120 is an ATP binding site. A substrate-binding site is contributed by Arg-139. Position 156 (Gln-156) interacts with ATP.

The protein belongs to the shikimate kinase family. As to quaternary structure, monomer. Requires Mg(2+) as cofactor.

It localises to the cytoplasm. The catalysed reaction is shikimate + ATP = 3-phosphoshikimate + ADP + H(+). It functions in the pathway metabolic intermediate biosynthesis; chorismate biosynthesis; chorismate from D-erythrose 4-phosphate and phosphoenolpyruvate: step 5/7. Its function is as follows. Catalyzes the specific phosphorylation of the 3-hydroxyl group of shikimic acid using ATP as a cosubstrate. This Shewanella woodyi (strain ATCC 51908 / MS32) protein is Shikimate kinase.